The primary structure comprises 200 residues: NADH-quinone oxidoreductase subunit B 2 (200 aa).

Residues cysteine 79, cysteine 80, cysteine 144, and cysteine 174 each contribute to the [4Fe-4S] cluster site.

Belongs to the complex I 20 kDa subunit family. As to quaternary structure, NDH-1 is composed of 14 different subunits. Subunits NuoB, C, D, E, F, and G constitute the peripheral sector of the complex. [4Fe-4S] cluster is required as a cofactor.

Its subcellular location is the cell inner membrane. It catalyses the reaction a quinone + NADH + 5 H(+)(in) = a quinol + NAD(+) + 4 H(+)(out). Functionally, NDH-1 shuttles electrons from NADH, via FMN and iron-sulfur (Fe-S) centers, to quinones in the respiratory chain. The immediate electron acceptor for the enzyme in this species is believed to be ubiquinone. Couples the redox reaction to proton translocation (for every two electrons transferred, four hydrogen ions are translocated across the cytoplasmic membrane), and thus conserves the redox energy in a proton gradient. This is NADH-quinone oxidoreductase subunit B 2 from Rhodopseudomonas palustris (strain BisA53).